Reading from the N-terminus, the 694-residue chain is uncharacterized protein (694 aa).

Positions 15-51 form a coiled coil; that stretch reads HKEKMELLDQFDNERKEWESQWKIMQKKIEELCREVK. Disordered regions lie at residues 259–286, 461–490, and 643–680; these read LKRN…EQAY, QNHS…QSND, and NASH…RRTT. Polar residues-rich tracts occupy residues 272–283 and 476–490; these read STSRNFPSSDSE and DTSS…QSND. A compositionally biased stretch (low complexity) spans 663–677; sequence SRWASRSPSAPPALR.

This is an uncharacterized protein from Homo sapiens (Human).